The sequence spans 303 residues: MRIIFMGSPEFSVVALSSILNNTEHKIVGVYTRVPKPAGRGKVLTKTPIHTVAEMHGLTVYTPKSLKRIEEQDRIKELNPDVIVVVAYGLIIPKEVLSIPKYGCINIHPSLLPRWRGAAPIHYAILHGDSQTGVTIMQMNEGWDEGDILLQKKLSIDEQDNIETLSSKLSNLGGAMLVEVLNNIDNLVPVAQNEDNATYTNKIEDFHIDINETAEVACRRIRALYPRAFVFFNGKRLRILQASYYYDDNISSLKPSSILNSGMHIKCKGNTILVPLVVQMEGKTLCSIKDFVCGYNVKDYSIT.

Position 110–113 (110–113 (SLLP)) interacts with (6S)-5,6,7,8-tetrahydrofolate.

This sequence belongs to the Fmt family.

The catalysed reaction is L-methionyl-tRNA(fMet) + (6R)-10-formyltetrahydrofolate = N-formyl-L-methionyl-tRNA(fMet) + (6S)-5,6,7,8-tetrahydrofolate + H(+). Its function is as follows. Attaches a formyl group to the free amino group of methionyl-tRNA(fMet). The formyl group appears to play a dual role in the initiator identity of N-formylmethionyl-tRNA by promoting its recognition by IF2 and preventing the misappropriation of this tRNA by the elongation apparatus. The sequence is that of Methionyl-tRNA formyltransferase from Ehrlichia ruminantium (strain Welgevonden).